The chain runs to 424 residues: MERIRKEIILMERGLHSPAGKKVSNLSDSAGNAVEEALENSHHSGRLSPRPTSASLHNTVGDTPTNGKFEIDNLFHHQHSSDSTSSSEISSLETRKKFSLYSELACREKEADMNSDVDVGCSTLRSPAGVSTTQLKENTNKVYSDNGSSTNTSSNGSNITNLNGNSSSIGNSGSGPDQVRRYRTAFTREQIGRLEKEFYRENYVSRPRRCELAAALNLPETTIKVWFQNRRMKDKRQRLAMSWPHPADPSFYTYMMTHAAATGSLPYPFHSHVPLHYYPHVGVTAAAAAAAATGATPFPTSIRPLDTFRALSHPYSRPELLCSFRHPGLYQSPHGLNSSAATAAAAAAAAAAASTPAGTAPCSCLSCHSNQSGALGPRSASSDFTCTATAQRSESSFLPYSAAVLSKSAAVSPPDQREESSLTR.

Disordered stretches follow at residues 18–65 (PAGK…DTPT) and 132–178 (TTQL…GPDQ). 2 stretches are compositionally biased toward polar residues: residues 50–65 (RPTS…DTPT) and 132–145 (TTQL…VYSD). Residues 146 to 175 (NGSSTNTSSNGSNITNLNGNSSSIGNSGSG) are compositionally biased toward low complexity. The homeobox DNA-binding region spans 179 to 238 (VRRYRTAFTREQIGRLEKEFYRENYVSRPRRCELAAALNLPETTIKVWFQNRRMKDKRQR).

The protein belongs to the even-skipped homeobox family.

It localises to the nucleus. The chain is Homeobox even-skipped homolog protein 2 (EVX2) from Heterodontus francisci (Horn shark).